Reading from the N-terminus, the 371-residue chain is Vasopressin V2 receptor (371 aa).

Residues 1–38 (MLLVSTVSAVPGLFSPPSSPSNSSQEELLDDRDPLLVR) are Extracellular-facing. Asn22 carries N-linked (GlcNAc...) asparagine glycosylation. Residues 39-63 (AELALLSTIFVAVALSNGLVLGALI) form a helical membrane-spanning segment. Over 64–77 (RRGRRGRWAPMHVF) the chain is Cytoplasmic. The helical transmembrane segment at 78 to 98 (ISHLCLADLAVALFQVLPQLA) threads the bilayer. Over 99–113 (WDATDRFHGPDALCR) the chain is Extracellular. The chain crosses the membrane as a helical span at residues 114–135 (AVKYLQMVGMYASSYMILAMTL). Topologically, residues 136–159 (DRHRAICRPMLAYRHGGGARWNRP) are cytoplasmic. A helical membrane pass occupies residues 160 to 180 (VLVAWAFSLLLSLPQLFIFAQ). At 181-200 (RDVGNGSGVFDCWARFAEPW) the chain is on the extracellular side. Residue Asn185 is glycosylated (N-linked (GlcNAc...) asparagine). A helical membrane pass occupies residues 201 to 220 (GLRAYVTWIALMVFVAPALG). The Cytoplasmic portion of the chain corresponds to 221 to 271 (IAACQVLIFREIHASLVPGPSERAGRRRRGRRTGSPSEGAHVSAAMAKTVR). Residues 240 to 260 (PSERAGRRRRGRRTGSPSEGA) are disordered. Residues 272-293 (MTLVIVIVYVLCWAPFFLVQLW) form a helical membrane-spanning segment. Residues 294-308 (AAWDPEAPLERPPFV) lie on the Extracellular side of the membrane. A helical membrane pass occupies residues 309 to 328 (LLMLLASLNSCTNPWIYASF). Over 329-371 (SSSVSSELRSLLCCAQRHTTHSLGPQDESCATASSSLMKDTPS) the chain is Cytoplasmic. S-palmitoyl cysteine attachment occurs at residues Cys341 and Cys342. Residues 349 to 371 (HSLGPQDESCATASSSLMKDTPS) form a disordered region. The segment covering 357 to 371 (SCATASSSLMKDTPS) has biased composition (polar residues).

This sequence belongs to the G-protein coupled receptor 1 family. Vasopressin/oxytocin receptor subfamily. Interacts with ARRDC4. Identified in a complex containing at least ARRDC4, V2R and HGS. Interacts with TMEM147. Kidney.

The protein localises to the cell membrane. Its function is as follows. Receptor for arginine vasopressin. The activity of this receptor is mediated by G proteins which activate adenylate cyclase. Involved in renal water reabsorption. In Rattus norvegicus (Rat), this protein is Vasopressin V2 receptor (Avpr2).